A 376-amino-acid polypeptide reads, in one-letter code: Probable sister chromatid cohesion protein DCC1 (376 aa).

The disordered stretch occupies residues 213–232 (QKSPTNSGGGGEEIKGGGGD). Gly residues predominate over residues 219-232 (SGGGGEEIKGGGGD).

Belongs to the DCC1 family.

The protein localises to the nucleus. Its function is as follows. Loads PCNA onto primed templates regulating velocity, spacing and restart activity of replication forks. May couple DNA replication to sister chromatid cohesion. The protein is Probable sister chromatid cohesion protein DCC1 of Dictyostelium discoideum (Social amoeba).